The following is a 562-amino-acid chain: Membrane protein insertase YidC (562 aa).

The chain crosses the membrane as a helical span at residues 1-21 (MDIKRTILIVALAIVTYVGVL). Residues 42–74 (TAPGIPDTAAGNNGSASADVPSATGNTTSAAPL) form a disordered region. 5 helical membrane passes run 343 to 363 (LELT…FWLL), 369 to 389 (ILGN…GLFF), 439 to 459 (LGGC…YWVL), 470 to 490 (WILW…PIIM), and 517 to 537 (PIIF…YWVV).

This sequence belongs to the OXA1/ALB3/YidC family. Type 1 subfamily. In terms of assembly, interacts with the Sec translocase complex via SecD. Specifically interacts with transmembrane segments of nascent integral membrane proteins during membrane integration.

Its subcellular location is the cell inner membrane. In terms of biological role, required for the insertion and/or proper folding and/or complex formation of integral membrane proteins into the membrane. Involved in integration of membrane proteins that insert both dependently and independently of the Sec translocase complex, as well as at least some lipoproteins. Aids folding of multispanning membrane proteins. The polypeptide is Membrane protein insertase YidC (Pseudomonas syringae pv. tomato (strain ATCC BAA-871 / DC3000)).